Consider the following 552-residue polypeptide: Glutamine-dependent NAD(+) synthetase (552 aa).

A CN hydrolase domain is found at 5-245; sequence FRITLAQLNP…EAVVHVDLER (241 aa). The Proton acceptor; for glutaminase activity role is filled by E45. The For glutaminase activity role is filled by K113. The active-site Nucleophile; for glutaminase activity is the C149. Positions 175 and 181 each coordinate L-glutamine. Positions 275–552 are ligase; the sequence is LQDYLRKSGF…PMVNRWRDQS (278 aa). Residue 290-297 participates in ATP binding; that stretch reads GLSGGIDS. Deamido-NAD(+) is bound at residue N373. T397 lines the ATP pocket. Residues E402 and K521 each coordinate deamido-NAD(+).

The protein in the C-terminal section; belongs to the NAD synthetase family.

The catalysed reaction is deamido-NAD(+) + L-glutamine + ATP + H2O = L-glutamate + AMP + diphosphate + NAD(+) + H(+). It functions in the pathway cofactor biosynthesis; NAD(+) biosynthesis; NAD(+) from deamido-NAD(+) (L-Gln route): step 1/1. Its function is as follows. Catalyzes the ATP-dependent amidation of deamido-NAD to form NAD. Uses L-glutamine as a nitrogen source. The protein is Glutamine-dependent NAD(+) synthetase of Rhodobacter capsulatus (Rhodopseudomonas capsulata).